We begin with the raw amino-acid sequence, 65 residues long: Large ribosomal subunit protein bL35 (65 aa).

A compositionally biased stretch (basic residues) spans 1–11; sequence MPKIKTRRSAA. The tract at residues 1–25 is disordered; sequence MPKIKTRRSAAKRFSVTGSGKFRRR.

This sequence belongs to the bacterial ribosomal protein bL35 family.

The sequence is that of Large ribosomal subunit protein bL35 from Nitratidesulfovibrio vulgaris (strain ATCC 29579 / DSM 644 / CCUG 34227 / NCIMB 8303 / VKM B-1760 / Hildenborough) (Desulfovibrio vulgaris).